The primary structure comprises 337 residues: Ketol-acid reductoisomerase (NADP(+)) (337 aa).

Positions 1–180 (MKIYYDTDVN…GGGRAGIIET (180 aa)) constitute a KARI N-terminal Rossmann domain. NADP(+)-binding positions include 24–27 (YGSQ), arginine 47, serine 51, and 81–84 (DELQ). Residue histidine 106 is part of the active site. Glycine 132 is a binding site for NADP(+). Positions 181–326 (TFKDETETDL…EKLRAMMPWL (146 aa)) constitute a KARI C-terminal knotted domain. Residues aspartate 189, glutamate 193, glutamate 225, and glutamate 229 each coordinate Mg(2+). Serine 250 is a substrate binding site.

Belongs to the ketol-acid reductoisomerase family. Mg(2+) serves as cofactor.

It carries out the reaction (2R)-2,3-dihydroxy-3-methylbutanoate + NADP(+) = (2S)-2-acetolactate + NADPH + H(+). The catalysed reaction is (2R,3R)-2,3-dihydroxy-3-methylpentanoate + NADP(+) = (S)-2-ethyl-2-hydroxy-3-oxobutanoate + NADPH + H(+). It participates in amino-acid biosynthesis; L-isoleucine biosynthesis; L-isoleucine from 2-oxobutanoate: step 2/4. Its pathway is amino-acid biosynthesis; L-valine biosynthesis; L-valine from pyruvate: step 2/4. Involved in the biosynthesis of branched-chain amino acids (BCAA). Catalyzes an alkyl-migration followed by a ketol-acid reduction of (S)-2-acetolactate (S2AL) to yield (R)-2,3-dihydroxy-isovalerate. In the isomerase reaction, S2AL is rearranged via a Mg-dependent methyl migration to produce 3-hydroxy-3-methyl-2-ketobutyrate (HMKB). In the reductase reaction, this 2-ketoacid undergoes a metal-dependent reduction by NADPH to yield (R)-2,3-dihydroxy-isovalerate. This chain is Ketol-acid reductoisomerase (NADP(+)), found in Thermodesulfovibrio yellowstonii (strain ATCC 51303 / DSM 11347 / YP87).